The sequence spans 125 residues: Probable growth factor FPV211 (125 aa).

The signal sequence occupies residues 1 to 48 (MKEPLIEVKREYNLIKTLTGKKFVVSTSIVVVLLIINMIFYGIRIHEL). The EGF-like domain maps to 80-120 (LFEKCKSKFNNFCIYGECMNIINLDKKFCICNKGYTGNRCD). 3 cysteine pairs are disulfide-bonded: Cys-84/Cys-97, Cys-92/Cys-108, and Cys-110/Cys-119.

Its subcellular location is the secreted. In Vertebrata (FPV), this protein is Probable growth factor FPV211.